We begin with the raw amino-acid sequence, 394 residues long: Cysteine protease ATG4B (394 aa).

Cysteine 74 acts as the Nucleophile in catalysis. Residues aspartate 280 and histidine 282 contribute to the active site. An LIR motif is present at residues 389–392 (FEIL).

Belongs to the peptidase C54 family.

It localises to the cytoplasm. The protein resides in the cytosol. It is found in the cytoplasmic vesicle. The protein localises to the autophagosome. Its subcellular location is the endoplasmic reticulum. It localises to the mitochondrion. The enzyme catalyses [protein]-C-terminal L-amino acid-glycyl-phosphatidylethanolamide + H2O = [protein]-C-terminal L-amino acid-glycine + a 1,2-diacyl-sn-glycero-3-phosphoethanolamine. It carries out the reaction [protein]-C-terminal L-amino acid-glycyl-phosphatidylserine + H2O = [protein]-C-terminal L-amino acid-glycine + a 1,2-diacyl-sn-glycero-3-phospho-L-serine. Its function is as follows. Cysteine protease that plays a key role in autophagy by mediating both proteolytic activation and delipidation of ATG8 family proteins. Required for canonical autophagy (macroautophagy), non-canonical autophagy as well as for mitophagy. The protease activity is required for proteolytic activation of ATG8 family proteins: cleaves the C-terminal amino acid of ATG8 proteins to reveal a C-terminal glycine. Exposure of the glycine at the C-terminus is essential for ATG8 proteins conjugation to phosphatidylethanolamine (PE) and insertion to membranes, which is necessary for autophagy. Protease activity is also required to counteract formation of high-molecular weight conjugates of ATG8 proteins (ATG8ylation): acts as a deubiquitinating-like enzyme that removes ATG8 conjugated to other proteins, such as ATG3. In addition to the protease activity, also mediates delipidation of ATG8 family proteins. Catalyzes delipidation of PE-conjugated forms of ATG8 proteins during macroautophagy. Also involved in non-canonical autophagy, a parallel pathway involving conjugation of ATG8 proteins to single membranes at endolysosomal compartments, by catalyzing delipidation of ATG8 proteins conjugated to phosphatidylserine (PS). The sequence is that of Cysteine protease ATG4B from Danio rerio (Zebrafish).